Reading from the N-terminus, the 510-residue chain is Metalloprotease TIKI homolog (510 aa).

The signal sequence occupies residues Met-1–Gly-30. Topologically, residues Ser-31 to Arg-489 are extracellular. 9 N-linked (GlcNAc...) asparagine glycosylation sites follow: Asn-37, Asn-98, Asn-108, Asn-141, Asn-223, Asn-281, Asn-322, Asn-383, and Asn-417. Residues Thr-435–Ser-471 are compositionally biased toward low complexity. The interval Thr-435–Asp-477 is disordered. Residues Tyr-490 to Leu-510 traverse the membrane as a helical segment.

Belongs to the TIKI family. Requires Mn(2+) as cofactor. The cofactor is Co(2+).

Its subcellular location is the membrane. In terms of biological role, metalloprotease. The protein is Metalloprotease TIKI homolog of Amphimedon queenslandica (Sponge).